The following is a 570-amino-acid chain: MFS-type transporter pigP (570 aa).

The interval 14–54 is disordered; that stretch reads GMIKKAHPEQTPPDVSHEGDVATEKGDSDGVEQAAPTGPTD. The segment covering 28–41 has biased composition (basic and acidic residues); that stretch reads VSHEGDVATEKGDS. 7 helical membrane-spanning segments follow: residues 65–85, 99–119, 131–151, 162–182, 192–212, 221–241, and 263–283; these read VMIM…TSII, LPDV…LVPL, WSFV…GVAT, VAGM…AGCV, GLLM…GGAF, CFYI…FVHI, and LVGF…LQYG. Asn290 is a glycosylation site (N-linked (GlcNAc...) asparagine). 7 consecutive transmembrane segments (helical) span residues 293–313, 336–356, 369–389, 392–412, 425–445, 455–475, and 533–553; these read VVIG…LWEW, VVYG…PIYF, VYIL…GALV, FGYY…GNGL, WIGY…MPII, LIPV…STFL, and VFYL…GMGW.

The protein belongs to the major facilitator superfamily. TCR/Tet family.

The protein localises to the cell membrane. In terms of biological role, MFS-type transporter; part of the gene cluster that mediates the biosynthesis of azaphilone pigments (MonAzPs), very widely used as food colorant. The chain is MFS-type transporter pigP from Monascus ruber (Mold).